We begin with the raw amino-acid sequence, 385 residues long: Hsp70/Hsp90 co-chaperone CNS1 (385 aa).

The segment at 1–37 is disordered; it reads MSSVNANGGYTKPQKYVPGPGDPELPPQLSEFKDKTS. TPR repeat units lie at residues 83-116, 121-154, and 155-189; these read AENFKKQGNELYKAKRFKDARELYSKGLAVECED, ESLYANRAACELELKNYRRCIEDCSKALTINPKN, and VKCYYRTSKAFFQLNKLEEAKSAATFANQRIDPEN.

It belongs to the TTC4 family. As to quaternary structure, monomer. Component of Hsp70 and Hsp90 chaperone complexes. Interacts (via TPR repeats) with HSC82 and HSP82 (via C-terminal MEEVD pentapeptide). Interacts with CPR7, SSA1 and SPI1.

Its subcellular location is the cytoplasm. Co-chaperone that binds to the molecular chaperones Hsp90 (HSC82 and HSP82) and Hsp70 (SSA1). Stimulates SSA1 ATPase activity, but not Hsp90 ATPase activity. Involved in only a subset of Hsp90 functions. This Saccharomyces cerevisiae (strain ATCC 204508 / S288c) (Baker's yeast) protein is Hsp70/Hsp90 co-chaperone CNS1 (CNS1).